The primary structure comprises 151 residues: 3-hydroxyacyl-[acyl-carrier-protein] dehydratase FabZ (151 aa).

H54 is a catalytic residue.

The protein belongs to the thioester dehydratase family. FabZ subfamily.

The protein localises to the cytoplasm. It catalyses the reaction a (3R)-hydroxyacyl-[ACP] = a (2E)-enoyl-[ACP] + H2O. Functionally, involved in unsaturated fatty acids biosynthesis. Catalyzes the dehydration of short chain beta-hydroxyacyl-ACPs and long chain saturated and unsaturated beta-hydroxyacyl-ACPs. In Buchnera aphidicola subsp. Acyrthosiphon pisum (strain 5A), this protein is 3-hydroxyacyl-[acyl-carrier-protein] dehydratase FabZ.